The chain runs to 448 residues: Fibulin-5 (448 aa).

The signal sequence occupies residues 1–23 (MPGFKRILTVTVLALCLPTPGNA). One can recognise an EGF-like 1; calcium-binding domain in the interval 42 to 82 (DVDECRTIPEACRGDMMCVNQNGGYLCIPRTNPVYRGPYSN). 17 disulfides stabilise this stretch: cysteine 46–cysteine 59, cysteine 53–cysteine 68, cysteine 131–cysteine 144, cysteine 138–cysteine 153, cysteine 155–cysteine 166, cysteine 172–cysteine 181, cysteine 177–cysteine 190, cysteine 192–cysteine 205, cysteine 211–cysteine 221, cysteine 217–cysteine 230, cysteine 232–cysteine 245, cysteine 251–cysteine 262, cysteine 258–cysteine 271, cysteine 273–cysteine 286, cysteine 292–cysteine 305, cysteine 299–cysteine 314, and cysteine 320–cysteine 332. The Cell attachment site signature appears at 54–56 (RGD). The EGF-like 2; calcium-binding domain maps to 127–167 (DVDECATDSHQCNPTQICINTEGGYTCSCTDGYWLLEGQCL). The region spanning 168–206 (DIDECRYGYCQQLCANVPGSYSCTCNPGFTLNEDGRSCQ) is the EGF-like 3; calcium-binding domain. Residues 207 to 246 (DVNECATENPCVQTCVNTYGSFICRCDPGYELEDDGVHCS) enclose the EGF-like 4; calcium-binding domain. An interaction with LOXL1 region spans residues 245-448 (CSDMDECSFS…LRIYVSQYPF (204 aa)). Positions 247-287 (DMDECSFSEFLCQHECVNQPGTYFCSCPAGYILLDDNRSCQ) constitute an EGF-like 5; calcium-binding domain. Asparagine 283 and asparagine 296 each carry an N-linked (GlcNAc...) asparagine glycan. One can recognise an EGF-like 6; calcium-binding domain in the interval 288–333 (DINECEHRNHTCILQQTCYNLQGGFKCIDPIRCEEPYLRISDNRCM).

Belongs to the fibulin family. As to quaternary structure, homodimer. Monomer, homodimerizes in presence of Ca(2+). Interacts with ELN. Interacts (via N-terminus) with the integrins ITGAV/ITGB3, ITGAV/ITGB5 and ITGA9/ITGB1. Interacts with FBN1 (via N-terminal domain). Forms a ternary complex with ELN and FBN1. Interacts with EFEMP2 with moderate affinity. Interacts with LOXL1. In terms of processing, N-glycosylated.

The protein resides in the secreted. It localises to the extracellular space. It is found in the extracellular matrix. Functionally, essential for elastic fiber formation, is involved in the assembly of continuous elastin (ELN) polymer and promotes the interaction of microfibrils and ELN. Stabilizes and organizes elastic fibers in the skin, lung and vasculature. Promotes adhesion of endothelial cells through interaction of integrins and the RGD motif. Vascular ligand for integrin receptors which may play a role in vascular development and remodeling. May act as an adapter that mediates the interaction between FBN1 and ELN. In Bos taurus (Bovine), this protein is Fibulin-5 (FBLN5).